A 381-amino-acid chain; its full sequence is cAMP-dependent protein kinase type I-alpha regulatory subunit (381 aa).

N-acetylmethionine is present on Met-1. Ala-2 is modified (N-acetylalanine; in cAMP-dependent protein kinase type I-alpha regulatory subunit, N-terminally processed). Residues 2–136 form a dimerization and phosphorylation region; it reads ASGSMATSEE…ALAKAIEKNV (135 aa). Position 3 is a phosphoserine (Ser-3). Positions 73–96 are disordered; sequence IRTDSREDEISPPPPNPVVKGRRR. At Thr-75 the chain carries Phosphothreonine. A phosphoserine mark is found at Ser-77 and Ser-83. The Pseudophosphorylation motif signature appears at 96 to 100; it reads RRGAI. Residue Ser-101 is modified to Phosphoserine. Residues 137–254, Glu-202, Arg-211, 255–381, Glu-326, and Arg-335 each bind 3',5'-cyclic AMP; these read LFSH…SKVS and ILES…SLSV. Ser-258 carries the post-translational modification Phosphoserine.

This sequence belongs to the cAMP-dependent kinase regulatory chain family. In terms of assembly, the inactive holoenzyme is composed of two regulatory chains and two catalytic chains. Activation by cAMP releases the two active catalytic monomers and the regulatory dimer. Interacts with PRKACA and PRKACB. PRKAR1A also interacts with RFC2; the complex may be involved in cell survival. Interacts with AKAP4. Interacts with RARA; the interaction occurs in the presence of cAMP or FSH and regulates RARA transcriptional activity. Interacts with the phosphorylated form of PJA2. Interacts with PRKX; regulates this cAMP-dependent protein kinase. Interacts with CBFA2T3. Interacts with smAKAP; this interaction may target PRKAR1A to the plasma membrane. Interacts with AICDA. In terms of processing, the pseudophosphorylation site binds to the substrate-binding region of the catalytic chain, resulting in the inhibition of its activity.

It localises to the cell membrane. In terms of biological role, regulatory subunit of the cAMP-dependent protein kinases involved in cAMP signaling in cells. The sequence is that of cAMP-dependent protein kinase type I-alpha regulatory subunit (Prkar1a) from Mus musculus (Mouse).